A 358-amino-acid chain; its full sequence is Heterogeneous nuclear ribonucleoprotein A2 homolog 2 (358 aa).

RRM domains follow at residues 9–92 (RKLF…ESAK) and 100–179 (KKLF…LSKQ). Disordered regions lie at residues 182 to 217 (QDVQ…FRGG) and 333 to 358 (YGGG…RNRY). Positions 193–217 (GNFGFGDSRGGGNFGSGPGGNFRGG) are enriched in gly residues. Residues 309-352 (QQSSSYGPMKSGGNFGGNRSMGGPYGGGNYGPGNGSGASGGGGY) are nuclear targeting sequence.

It localises to the nucleus. In terms of biological role, forms complexes (ribonucleosomes) with at least 20 other different hnRNP and heterogeneous nuclear RNA in the nucleus. The polypeptide is Heterogeneous nuclear ribonucleoprotein A2 homolog 2 (Xenopus laevis (African clawed frog)).